Consider the following 252-residue polypeptide: Probable transcriptional regulatory protein RF_0799 (252 aa).

Residues 1–21 (MAGHSKFKNIQHRKGAQDKKR) are disordered.

The protein belongs to the TACO1 family.

It is found in the cytoplasm. This Rickettsia felis (strain ATCC VR-1525 / URRWXCal2) (Rickettsia azadi) protein is Probable transcriptional regulatory protein RF_0799.